The sequence spans 1642 residues: Cholesterol transporter ABCA5 (1642 aa).

Residues 32 to 52 (SVQEILFPLFFLFWLILISMM) traverse the membrane as a helical segment. Asn86 is a glycosylation site (N-linked (GlcNAc...) asparagine). A run of 6 helical transmembrane segments spans residues 220–240 (VILI…AIHI), 264–284 (LSWV…MAVI), 297–317 (IVIF…ALML), 328–348 (GIVE…IILI), 355–375 (LVWL…AQVM), and 396–416 (LIIT…LAVY). Asn458 is a glycosylation site (N-linked (GlcNAc...) asparagine). One can recognise an ABC transporter 1 domain in the interval 478 to 713 (IRISGIQKTY…WGIGYRLSMY (236 aa)). Residue 514–521 (GHSGTGKS) participates in ATP binding. 2 consecutive transmembrane segments (helical) span residues 866–886 (LLLL…HHSF) and 967–987 (VFAA…VNII). Asn996 is a glycosylation site (N-linked (GlcNAc...) asparagine). The next 6 helical transmembrane spans lie at 1021 to 1041 (LYFQ…YFAM), 1071 to 1091 (VVDI…LLAF), 1102 to 1122 (FLAV…FTYI), 1139 to 1159 (FIYS…FFMG), 1169 to 1189 (AFCI…FIKI), and 1207 to 1227 (LSVA…LLQY). Positions 1249-1268 (KSKNRKLPEPPDNEDEDEDV) are disordered. Residues 1259-1268 (PDNEDEDEDV) are compositionally biased toward acidic residues. Residues 1290-1533 (IMVSNLHKEY…FGKGYFLEIK (244 aa)) form the ABC transporter 2 domain. 1333–1340 (GPNGAGKS) is an ATP binding site.

It belongs to the ABC transporter superfamily. ABCA family. N-glycosylated. In terms of tissue distribution, ubiquitously expressed. Highly expressed in testis, skeletal muscle, kidney, liver and placenta. Expressed in both the epithelial and mesenchymal compartments, present within the outer root sheath (ORS) of the hair follicle as well as dermal sheath. Expressed in multiple regions of the brain, including the hippocampus, superior frontal and inferior temporal cortices. Strongly expressed in neurons and moderately in microglia, with only weak expression in astrocytes and oligodendrocytes.

It is found in the golgi apparatus membrane. The protein localises to the lysosome membrane. Its subcellular location is the late endosome membrane. It localises to the cell membrane. It carries out the reaction cholesterol(in) + ATP + H2O = cholesterol(out) + ADP + phosphate + H(+). In terms of biological role, cholesterol efflux transporter in macrophages that is responsible for APOAI/high-density lipoproteins (HDL) formation at the plasma membrane under high cholesterol levels and participates in reverse cholesterol transport. May play a role in the processing of autolysosomes. The chain is Cholesterol transporter ABCA5 from Homo sapiens (Human).